A 238-amino-acid chain; its full sequence is Chorionic somatomammotropin hormone 2 (238 aa).

Positions 1-36 are cleaved as a signal peptide; that stretch reads MAPAPSFRGHQWTYNPVRGSCLLLLLVVSNLLLCQG. Residue histidine 66 coordinates Zn(2+). Asparagine 70, asparagine 92, asparagine 146, and asparagine 160 each carry an N-linked (GlcNAc...) asparagine glycan. A disulfide bond links cysteine 97 and cysteine 215. Position 224 (aspartate 224) interacts with Zn(2+). A disulfide bridge connects residues cysteine 232 and cysteine 238.

It belongs to the somatotropin/prolactin family.

The protein localises to the secreted. In Bos taurus (Bovine), this protein is Chorionic somatomammotropin hormone 2 (CSH2).